The chain runs to 112 residues: UPF0122 protein CPR_1686 (112 aa).

It belongs to the UPF0122 family.

Its function is as follows. Might take part in the signal recognition particle (SRP) pathway. This is inferred from the conservation of its genetic proximity to ftsY/ffh. May be a regulatory protein. This Clostridium perfringens (strain SM101 / Type A) protein is UPF0122 protein CPR_1686.